A 338-amino-acid polypeptide reads, in one-letter code: Transferrin receptor subunit ESAG7 (338 aa).

A signal peptide spans 1-17 (MRFWFVLLALLGKEIYA). N-linked (GlcNAc...) asparagine glycosylation is found at N26 and N110. 4 cysteine pairs are disulfide-bonded: C34–C161, C84–C311, C144–C215, and C230–C247. The N-linked (GlcNAc...) asparagine glycan is linked to N234.

Heterodimer composed of ESAG6 and ESAG7. N-glycosylated. Glycosylation is dispensable for heterodimer formation and host transferrin binding.

The protein resides in the cell membrane. Its subcellular location is the flagellar pocket. In terms of biological role, transferrin receptor subunit involved in receptor-mediated acquisition of iron from the environment by binding host TF/transferrin. The polypeptide is Transferrin receptor subunit ESAG7 (Trypanosoma brucei brucei).